The following is a 344-amino-acid chain: Ribosomal RNA large subunit methyltransferase Cfr (344 aa).

Glu-88 (proton acceptor) is an active-site residue. A Radical SAM core domain is found at 95-324 (KKGWESFCIS…HANGISVATR (230 aa)). A disulfide bridge connects residues Cys-102 and Cys-335. Positions 109, 113, and 116 each coordinate [4Fe-4S] cluster. Residues 155–156 (GE), Ser-186, 209–211 (SLH), and Asn-290 each bind S-adenosyl-L-methionine. Cys-335 (S-methylcysteine intermediate) is an active-site residue.

It belongs to the radical SAM superfamily. RlmN family. Cfr subfamily. [4Fe-4S] cluster serves as cofactor.

It localises to the cytoplasm. It catalyses the reaction adenosine(2503) in 23S rRNA + 2 reduced [2Fe-2S]-[ferredoxin] + 2 S-adenosyl-L-methionine = 8-methyladenosine(2503) in 23S rRNA + 5'-deoxyadenosine + L-methionine + 2 oxidized [2Fe-2S]-[ferredoxin] + S-adenosyl-L-homocysteine. Functionally, specifically methylates position 8 of adenine 2503 in 23S rRNA. Confers resistance to some classes of antibiotics. The polypeptide is Ribosomal RNA large subunit methyltransferase Cfr (Lachnoclostridium phytofermentans (strain ATCC 700394 / DSM 18823 / ISDg) (Clostridium phytofermentans)).